The chain runs to 635 residues: Threonine--tRNA ligase (635 aa).

The tract at residues 1 to 144 (MQLLLIHSDY…RTIRLEGAVP (144 aa)) is editing domain. Residues 215–514 (PHVELMRRLE…AEEGKVPNLP (300 aa)) form a catalytic region. Zn(2+) contacts are provided by C307, H359, and H483.

It belongs to the class-II aminoacyl-tRNA synthetase family. In terms of assembly, homodimer. Zn(2+) is required as a cofactor.

The protein resides in the cytoplasm. The enzyme catalyses tRNA(Thr) + L-threonine + ATP = L-threonyl-tRNA(Thr) + AMP + diphosphate + H(+). Its function is as follows. Catalyzes the attachment of threonine to tRNA(Thr) in a two-step reaction: L-threonine is first activated by ATP to form Thr-AMP and then transferred to the acceptor end of tRNA(Thr). Also edits incorrectly charged L-seryl-tRNA(Thr). This chain is Threonine--tRNA ligase, found in Methanococcoides burtonii (strain DSM 6242 / NBRC 107633 / OCM 468 / ACE-M).